The chain runs to 271 residues: Tetraspanin-11 (271 aa).

Over 1-7 the chain is Cytoplasmic; sequence MFRVSNF. Residues 8–28 form a helical membrane-spanning segment; that stretch reads MVGLANTLVMLVGASAIGYSI. Topologically, residues 29–44 are extracellular; it reads YMFVHQGVTDCESAIR. Residues 45–65 form a helical membrane-spanning segment; the sequence is IPLLTTGLILFLVSLLGVIGS. Residues 66–76 are Cytoplasmic-facing; that stretch reads CFKENLAMVSY. Residues 77–97 form a helical membrane-spanning segment; the sequence is LIILFGGIVALMIFSIFLFFV. Over 98-236 the chain is Extracellular; sequence TNKGAGRVVS…LANIREKWRN (139 aa). N-linked (GlcNAc...) asparagine glycans are attached at residues asparagine 185 and asparagine 195. Residues 237–257 traverse the membrane as a helical segment; the sequence is LLVFNICLLILLITVYSCGCC. Residues 258 to 271 are Cytoplasmic-facing; it reads ARRNNRTARKSDSV.

The protein belongs to the tetraspanin (TM4SF) family.

It is found in the membrane. Its function is as follows. May be involved in the regulation of cell differentiation. This Arabidopsis thaliana (Mouse-ear cress) protein is Tetraspanin-11 (TET11).